The chain runs to 570 residues: Zinc finger and BTB domain-containing protein 44 (570 aa).

Residue Lys-4 forms a Glycyl lysine isopeptide (Lys-Gly) (interchain with G-Cter in SUMO2) linkage. Residues 31-98 form the BTB domain; sequence CDITIRVQDK…AYTATLSINT (68 aa). Ser-135, Ser-159, Ser-161, Ser-165, Ser-191, and Ser-194 each carry phosphoserine. Disordered stretches follow at residues 194 to 220 and 243 to 267; these read SPVK…NRNQ and EKVK…RRMA. The span at 199 to 220 shows a compositional bias: polar residues; it reads GTQTSSPQVLNSSASYSENRNQ. Thr-200 carries the phosphothreonine modification. Residue Lys-290 forms a Glycyl lysine isopeptide (Lys-Gly) (interchain with G-Cter in SUMO2) linkage. Positions 295 to 369 are disordered; it reads SDEEVHEEVS…NAPPDDDDRL (75 aa). The segment covering 304 to 318 has biased composition (low complexity); it reads SQPVSASQSSLSDQQ. Over residues 352–361 the composition is skewed to polar residues; the sequence is TLQSTSSTNA. 4 consecutive C2H2-type zinc fingers follow at residues 399–421, 427–449, 455–479, and 487–511; these read FQCP…MLIH, FQCD…RLKH, FRCQ…VSRH, and YECK…SLNH.

Its subcellular location is the nucleus. In terms of biological role, may be involved in transcriptional regulation. The sequence is that of Zinc finger and BTB domain-containing protein 44 (ZBTB44) from Homo sapiens (Human).